We begin with the raw amino-acid sequence, 258 residues long: Indole-3-glycerol phosphate synthase (258 aa).

The protein belongs to the TrpC family.

The enzyme catalyses 1-(2-carboxyphenylamino)-1-deoxy-D-ribulose 5-phosphate + H(+) = (1S,2R)-1-C-(indol-3-yl)glycerol 3-phosphate + CO2 + H2O. The protein operates within amino-acid biosynthesis; L-tryptophan biosynthesis; L-tryptophan from chorismate: step 4/5. The protein is Indole-3-glycerol phosphate synthase of Geobacillus kaustophilus (strain HTA426).